A 371-amino-acid polypeptide reads, in one-letter code: DNA replication and repair protein RecF (371 aa).

Position 30-37 (30-37 (GKNGQGKT)) interacts with ATP.

The protein belongs to the RecF family.

The protein localises to the cytoplasm. Its function is as follows. The RecF protein is involved in DNA metabolism; it is required for DNA replication and normal SOS inducibility. RecF binds preferentially to single-stranded, linear DNA. It also seems to bind ATP. This is DNA replication and repair protein RecF from Clostridioides difficile (strain 630) (Peptoclostridium difficile).